The primary structure comprises 220 residues: Probable GTP-binding protein EngB (220 aa).

Positions 41–219 (DRSEVCFAGR…RAEIAALAML (179 aa)) constitute an EngB-type G domain. GTP is bound by residues 49-56 (GRSNVGKS), 76-80 (GRTRE), 96-99 (DLPG), 164-167 (TKVD), and 197-200 (MTSA). Mg(2+) contacts are provided by S56 and T78.

Belongs to the TRAFAC class TrmE-Era-EngA-EngB-Septin-like GTPase superfamily. EngB GTPase family. Mg(2+) is required as a cofactor.

Its function is as follows. Necessary for normal cell division and for the maintenance of normal septation. The polypeptide is Probable GTP-binding protein EngB (Hyphomonas neptunium (strain ATCC 15444)).